The sequence spans 218 residues: Large ribosomal subunit protein uL3c (218 aa).

The disordered stretch occupies residues 127–161 (GFSRGPMTHGSKNHREPGSTGAGTTPGRIYPGKRM).

It belongs to the universal ribosomal protein uL3 family. As to quaternary structure, part of the 50S ribosomal subunit.

Its subcellular location is the plastid. It is found in the organellar chromatophore. In terms of biological role, one of the primary rRNA binding proteins, it binds directly near the 3'-end of the 23S rRNA, where it nucleates assembly of the 50S subunit. This Paulinella chromatophora protein is Large ribosomal subunit protein uL3c (rpl3).